The following is a 691-amino-acid chain: F-box/LRR-repeat protein 5 (691 aa).

Positions 1-159 (MAPFPEEVDV…IKKKVIAQHC (159 aa)) are hemerythrin-like. Positions 15, 57, 58, 61, 80, 126, and 130 each coordinate Fe(3+). Residues 202 to 248 (STGITHLPPEVMVSIFSYLNPQELCRCSQVSTKWSQLAKTGSLWKHL) form the F-box domain. 7 LRR repeats span residues 340 to 364 (SSAV…LDLT), 365 to 392 (QTDI…DLSG), 393 to 418 (CEKI…ESGL), 479 to 508 (VWML…CVME), 576 to 607 (TRLL…SLSG), 608 to 635 (CYQI…NLSG), and 636 to 661 (CLTV…YFYY). The [2Fe-2S] cluster site is built by Cys-662, Cys-676, Cys-686, and Cys-687.

In terms of assembly, part of a SCF (SKP1-cullin-F-box) protein ligase complex. Interacts with ACO1/IRP1, IREB2/IRP2; the interaction depends on the [2Fe-2S] cluster. Interacts with DCTN1/p150-glued. [2Fe-2S] cluster is required as a cofactor. Post-translationally, polybiquitinated upon iron and oxygen depletion, leading to its degradation by the proteasome. Ubiquitination is regulated by the hemerythrin-like region that acts as an oxygen and iron sensor. Undergoes constitutive ubiquitin-dependent degradation at the steady state by HERC2.

The protein localises to the cytoplasm. It localises to the perinuclear region. The protein resides in the nucleus. It functions in the pathway protein modification; protein ubiquitination. An iron-sulfur cluster promotes IRP2 polyubiquitination and degradation in response to both iron and oxygen concentrations. Functionally, component of some SCF (SKP1-cullin-F-box) protein ligase complex that plays a central role in iron homeostasis by promoting the ubiquitination and subsequent degradation of IREB2/IRP2. The C-terminal domain of FBXL5 contains a redox-sensitive [2Fe-2S] cluster that, upon oxidation, promotes binding to IRP2 to effect its oxygen-dependent degradation. Under iron deficiency conditions, the N-terminal hemerythrin-like (Hr) region, which contains a diiron metal center, cannot bind iron and undergoes conformational changes that destabilize the FBXL5 protein and cause its ubiquitination and degradation. When intracellular iron levels start rising, the Hr region is stabilized. Additional increases in iron levels facilitate the assembly and incorporation of a redox active [2Fe-2S] cluster in the C-terminal domain. Only when oxygen level is high enough to maintain the cluster in its oxidized state can FBXL5 recruit IRP2 as a substrate for polyubiquination and degradation. Promotes ubiquitination and subsequent degradation of the dynactin complex component DCTN1. Within the nucleus, promotes the ubiquitination of SNAI1; preventing its interaction with DNA and promoting its degradation. Negatively regulates DNA damage response by mediating the ubiquitin-proteasome degradation of the DNA repair protein NABP2. This is F-box/LRR-repeat protein 5 (FBXL5) from Bos taurus (Bovine).